The chain runs to 221 residues: Response regulator protein PmrA (221 aa).

The Response regulatory domain maps to 2–116 (RILLAEDDLL…ELQARVRALT (115 aa)). Position 51 is a 4-aspartylphosphate (Asp51). The segment at residues 124-218 (LPQLVHGELR…VRGIGYGIDQ (95 aa)) is a DNA-binding region (ompR/PhoB-type).

It is found in the cytoplasm. Functionally, member of the two-component regulatory system PmrA/PmrB that plays a role in the regulation of resistance towards polymyxin B and cationic antimicrobial peptides in response to limiting concentrations of Mg(2+). Functions as a transcriptional activator by direct binding to a cis-acting sequence upstream of the target gene promoters including lipase lipA and pmrH promoters. Also autoregulates its own pmrAB operon under Mg(2+)-limiting conditions. The polypeptide is Response regulator protein PmrA (pmrA) (Pseudomonas aeruginosa (strain ATCC 15692 / DSM 22644 / CIP 104116 / JCM 14847 / LMG 12228 / 1C / PRS 101 / PAO1)).